A 343-amino-acid chain; its full sequence is Anthranilate phosphoribosyltransferase (343 aa).

Residues glycine 77, 80-81 (GD), threonine 85, 87-90 (NVST), 105-113 (KHGNRSSSG), and serine 117 each bind 5-phospho-alpha-D-ribose 1-diphosphate. Glycine 77 lines the anthranilate pocket. Residue serine 89 coordinates Mg(2+). Asparagine 108 serves as a coordination point for anthranilate. Arginine 163 serves as a coordination point for anthranilate. The Mg(2+) site is built by aspartate 222 and glutamate 223.

This sequence belongs to the anthranilate phosphoribosyltransferase family. In terms of assembly, homodimer. The cofactor is Mg(2+).

The catalysed reaction is N-(5-phospho-beta-D-ribosyl)anthranilate + diphosphate = 5-phospho-alpha-D-ribose 1-diphosphate + anthranilate. It participates in amino-acid biosynthesis; L-tryptophan biosynthesis; L-tryptophan from chorismate: step 2/5. In terms of biological role, catalyzes the transfer of the phosphoribosyl group of 5-phosphorylribose-1-pyrophosphate (PRPP) to anthranilate to yield N-(5'-phosphoribosyl)-anthranilate (PRA). The polypeptide is Anthranilate phosphoribosyltransferase (Cenarchaeum symbiosum (strain A)).